A 457-amino-acid polypeptide reads, in one-letter code: UDP-N-acetylmuramate--L-alanyl-gamma-D-glutamyl-meso-2,6-diaminoheptandioate ligase (457 aa).

An ATP-binding site is contributed by 110 to 116; it reads GTHGKTT.

The protein belongs to the MurCDEF family. Mpl subfamily. It depends on Mg(2+) as a cofactor.

The protein localises to the secreted. It catalyses the reaction UDP-N-acetyl-alpha-D-muramate + L-alanyl-gamma-D-glutamyl-meso-2,6-diaminopimelate + ATP = UDP-N-acetyl-alpha-D-muramoyl-L-alanyl-gamma-D-glutamyl-meso-2,6-diaminopimelate + ADP + phosphate + H(+). It functions in the pathway cell wall biogenesis; peptidoglycan recycling. Reutilizes the intact tripeptide L-alanyl-gamma-D-glutamyl-meso-diaminopimelate by linking it to UDP-N-acetylmuramate. The enzyme can also use the tetrapeptide L-alanyl-gamma-D-glutamyl-meso-2,6-diaminoheptanedioyl-D-alanine or the pentapeptide L-alanyl-gamma-D-glutamyl-meso-2,6-diaminoheptandioyl-D-alanyl-D-alanine in vivo and in vitro. In Escherichia coli (strain K12), this protein is UDP-N-acetylmuramate--L-alanyl-gamma-D-glutamyl-meso-2,6-diaminoheptandioate ligase.